Consider the following 242-residue polypeptide: DNA repair protein RecO (242 aa).

This sequence belongs to the RecO family. As to quaternary structure, monomer.

Functionally, involved in DNA repair and RecF pathway recombination. In Salmonella agona (strain SL483), this protein is DNA repair protein RecO.